Consider the following 1115-residue polypeptide: MPRRTDLHHVLVIGSGPIVIGQACEFDYSGTQACRVLRAEGLQVSLVNSNPATIMTDPEFADHTYVEPITPAFVERVIAQQAERGNKIDALLATLGGQTALNTAVALYESGVLEKYGVELIGADFDAIQRGEDRQRFKDIVAKAGGESARSRVCFTMAEVRETVAELGLPVVVRPSFTMGGLGSGIAYSTDEVDRMAGAGLAASPSANVLIEESIYGWKEFELELMRDGHDNVVVVCSIENVDPMGVHTGDSVTVAPAMTLTDREYQRMRDLGIAILREVGVDTGGCNIQFAVNPRDGRLIVIEMNPRVSRSSALASKATGFPIAKIAAKLAIGYTLDEIVNDITGETPACFEPTLDYVVVKAPRFAFEKFPGADPTLTTTMKSVGEAMSLGRNFVEALGKVMRSLETTRAGFWTAPDPDGGIEEALTRLRTPAEGRLYDIELALRLGATVERVAEASGVDPWFIAQINELVNLRNELVAAPVLNAELLRRAKHSGLSDHQIASLRPELAGEAGVRSLRVRLGIHPVYKTVDTCAAEFEAQTPYHYSSYELDPAAETEVAPQTERPKVLILGSGPNRIGQGIEFDYSCVHAATTLSQAGFETVMVNCNPETVSTDYDTADRLYFEPLTFEDVLEVYHAEMESGSGGPGVAGVIVQLGGQTPLGLAHRLADAGVPIVGTPPEAIDLAEDRGAFGDLLSAAGLPAPKYGTATTFAQARRIAEEIGYPVLVRPSYVLGGRGMEIVYDEETLQGYITRATQLSPEHPVLVDRFLEDAVEIDVDALCDGAEVYIGGIMEHIEEAGIHSGDSACALPPVTLGRSDIAKVRKATEAIAHGIGVVGLLNVQYALKDDVLYVLEANPRASRTVPFVSKATAVPLAKACARIMLGATIAQLRAEGLLAVTGDGAHAARNAPIAVKEAVLPFHRFRRADGAAIDSLLGPEMKSTGEVMGIDRDFGSAFAKSQTAAYGSLPAQGTVFVSVANRDKRSLVFPVKRLADLGFRVLATEGTAEMLRRNGIPCDDVRKHFEPAQPGRPTMSAVDAIRAGEVNMVINTPYGNSGPRIDGYEIRSAAVAGNIPCITTVQGASAAVQGIEAGIRGDIGVRSLQELHRVIGGVER.

Residues 1–407 are carboxyphosphate synthetic domain; that stretch reads MPRRTDLHHV…ALGKVMRSLE (407 aa). Residues arginine 134, arginine 174, glycine 180, glycine 181, glutamate 213, isoleucine 215, glutamate 220, glycine 246, valine 247, histidine 248, glutamine 290, and glutamate 304 each contribute to the ATP site. One can recognise an ATP-grasp 1 domain in the interval 138 to 333; it reads KDIVAKAGGE…IAKIAAKLAI (196 aa). The Mg(2+) site is built by glutamine 290, glutamate 304, and asparagine 306. Mn(2+) is bound by residues glutamine 290, glutamate 304, and asparagine 306. Positions 408–559 are oligomerization domain; sequence TTRAGFWTAP…ELDPAAETEV (152 aa). The interval 560–965 is carbamoyl phosphate synthetic domain; it reads APQTERPKVL…AFAKSQTAAY (406 aa). The ATP-grasp 2 domain occupies 693 to 884; it reads GDLLSAAGLP…LAKACARIML (192 aa). Arginine 729, arginine 768, leucine 770, glutamate 775, glycine 800, isoleucine 801, histidine 802, serine 803, glutamine 843, and glutamate 855 together coordinate ATP. Residues glutamine 843, glutamate 855, and asparagine 857 each coordinate Mg(2+). Mn(2+) contacts are provided by glutamine 843, glutamate 855, and asparagine 857. An MGS-like domain is found at 966–1113; sequence GSLPAQGTVF…QELHRVIGGV (148 aa). The segment at 966–1115 is allosteric domain; the sequence is GSLPAQGTVF…LHRVIGGVER (150 aa).

The protein belongs to the CarB family. Composed of two chains; the small (or glutamine) chain promotes the hydrolysis of glutamine to ammonia, which is used by the large (or ammonia) chain to synthesize carbamoyl phosphate. Tetramer of heterodimers (alpha,beta)4. It depends on Mg(2+) as a cofactor. The cofactor is Mn(2+).

The enzyme catalyses hydrogencarbonate + L-glutamine + 2 ATP + H2O = carbamoyl phosphate + L-glutamate + 2 ADP + phosphate + 2 H(+). It catalyses the reaction hydrogencarbonate + NH4(+) + 2 ATP = carbamoyl phosphate + 2 ADP + phosphate + 2 H(+). It functions in the pathway amino-acid biosynthesis; L-arginine biosynthesis; carbamoyl phosphate from bicarbonate: step 1/1. It participates in pyrimidine metabolism; UMP biosynthesis via de novo pathway; (S)-dihydroorotate from bicarbonate: step 1/3. Large subunit of the glutamine-dependent carbamoyl phosphate synthetase (CPSase). CPSase catalyzes the formation of carbamoyl phosphate from the ammonia moiety of glutamine, carbonate, and phosphate donated by ATP, constituting the first step of 2 biosynthetic pathways, one leading to arginine and/or urea and the other to pyrimidine nucleotides. The large subunit (synthetase) binds the substrates ammonia (free or transferred from glutamine from the small subunit), hydrogencarbonate and ATP and carries out an ATP-coupled ligase reaction, activating hydrogencarbonate by forming carboxy phosphate which reacts with ammonia to form carbamoyl phosphate. This chain is Carbamoyl phosphate synthase large chain, found in Mycobacterium tuberculosis (strain CDC 1551 / Oshkosh).